The chain runs to 367 residues: Dual specificity protein phosphatase 1 (367 aa).

Positions 20–137 (RAAQCLLLDC…FSASCPELCS (118 aa)) constitute a Rhodanese domain. Residues 173–314 (GPVEILSFLY…LLQFESQVLA (142 aa)) enclose the Tyrosine-protein phosphatase domain. Cysteine 258 functions as the Phosphocysteine intermediate in the catalytic mechanism. Serine 359 and serine 364 each carry phosphoserine; by MAPK1 and MAPK3.

The protein belongs to the protein-tyrosine phosphatase family. Non-receptor class dual specificity subfamily. Post-translationally, phosphorylation at Ser-359 and Ser-364 by MAPK1/ERK2 and MAPK3/ERK1 reduces its rate of degradation. 'Lys-48'-linked polyubiquitinated by NEURL3, leading to proteasomal degradation. In terms of tissue distribution, brain. High level expression seen in the cingulate gyrus within the retrospinal cortex, ventral and medial divisions of the anterior thalamus and the medial geniculate nucleus. Expressed at moderate levels in the parietal and temporal cortex. Expressed in the cerebellum.

It is found in the nucleus. The catalysed reaction is O-phospho-L-tyrosyl-[protein] + H2O = L-tyrosyl-[protein] + phosphate. It carries out the reaction O-phospho-L-seryl-[protein] + H2O = L-seryl-[protein] + phosphate. It catalyses the reaction O-phospho-L-threonyl-[protein] + H2O = L-threonyl-[protein] + phosphate. Its function is as follows. Dual specificity phosphatase that dephosphorylates MAP kinase MAPK1/ERK2 on both 'Thr-183' and 'Tyr-185', regulating its activity during the meiotic cell cycle. In Rattus norvegicus (Rat), this protein is Dual specificity protein phosphatase 1.